The chain runs to 249 residues: Galactan endo-beta-1,3-galactanase (249 aa).

The N-terminal stretch at 1-21 (MKLFVVLACLAAPGTFPFVDA) is a signal peptide. The GH16 domain maps to 34-247 (STYWNNFYPW…KARNVQVTRT (214 aa)). Asparagine 48 carries N-linked (GlcNAc...) asparagine glycosylation. Glutamate 138 acts as the Nucleophile in catalysis. Glutamate 143 (proton donor) is an active-site residue. A glycan (N-linked (GlcNAc...) asparagine) is linked at asparagine 156.

Belongs to the glycosyl hydrolase 16 family. In terms of processing, N-glycosylated.

The catalysed reaction is The enzyme specifically hydrolyzes beta-1,3-galactan and beta-1,3-galactooligosaccharides.. Specifically hydrolyzes beta-1,3-galactan in an endo-fashion. Requires at least 3 contiguous beta-1,3-residues. The polypeptide is Galactan endo-beta-1,3-galactanase (EN3GAL) (Flammulina velutipes (Agaricus velutipes)).